Reading from the N-terminus, the 145-residue chain is uncharacterized protein (145 aa).

The 68-residue stretch at K78–W145 folds into the ACT domain.

This is an uncharacterized protein from Methanocaldococcus jannaschii (strain ATCC 43067 / DSM 2661 / JAL-1 / JCM 10045 / NBRC 100440) (Methanococcus jannaschii).